Reading from the N-terminus, the 215-residue chain is Soluble inorganic pyrophosphatase (215 aa).

Residues 1-21 are compositionally biased toward low complexity; sequence MSQEDSTSAAAAQQPTSRPAP. Residues 1 to 24 form a disordered region; sequence MSQEDSTSAAAAQQPTSRPAPKLN. Aspartate 103, aspartate 108, and aspartate 140 together coordinate Mg(2+).

The protein belongs to the PPase family. It depends on Mg(2+) as a cofactor. Expressed in metabolically active tissue such as root, shoot, embryo and aleurone.

The protein localises to the cytoplasm. The catalysed reaction is diphosphate + H2O = 2 phosphate + H(+). In terms of biological role, may play a role in germination. The protein is Soluble inorganic pyrophosphatase (IPP) of Hordeum vulgare subsp. vulgare (Domesticated barley).